A 339-amino-acid polypeptide reads, in one-letter code: Phenylalanine--tRNA ligase alpha subunit (339 aa).

Residue Glu-254 participates in Mg(2+) binding.

The protein belongs to the class-II aminoacyl-tRNA synthetase family. Phe-tRNA synthetase alpha subunit type 1 subfamily. As to quaternary structure, tetramer of two alpha and two beta subunits. Mg(2+) is required as a cofactor.

It is found in the cytoplasm. The enzyme catalyses tRNA(Phe) + L-phenylalanine + ATP = L-phenylalanyl-tRNA(Phe) + AMP + diphosphate + H(+). The protein is Phenylalanine--tRNA ligase alpha subunit of Clostridium beijerinckii (strain ATCC 51743 / NCIMB 8052) (Clostridium acetobutylicum).